The primary structure comprises 115 residues: NAD(P)H-quinone oxidoreductase subunit M (115 aa).

This sequence belongs to the complex I NdhM subunit family. NDH-1 can be composed of about 15 different subunits; different subcomplexes with different compositions have been identified which probably have different functions.

The protein resides in the cellular thylakoid membrane. The enzyme catalyses a plastoquinone + NADH + (n+1) H(+)(in) = a plastoquinol + NAD(+) + n H(+)(out). The catalysed reaction is a plastoquinone + NADPH + (n+1) H(+)(in) = a plastoquinol + NADP(+) + n H(+)(out). Its function is as follows. NDH-1 shuttles electrons from an unknown electron donor, via FMN and iron-sulfur (Fe-S) centers, to quinones in the respiratory and/or the photosynthetic chain. The immediate electron acceptor for the enzyme in this species is believed to be plastoquinone. Couples the redox reaction to proton translocation, and thus conserves the redox energy in a proton gradient. Cyanobacterial NDH-1 also plays a role in inorganic carbon-concentration. This chain is NAD(P)H-quinone oxidoreductase subunit M, found in Prochlorococcus marinus (strain MIT 9312).